The primary structure comprises 316 residues: Prenytransferase adrG (316 aa).

A run of 7 helical transmembrane segments spans residues 36 to 56, 60 to 80, 131 to 151, 163 to 183, 191 to 211, 247 to 267, and 294 to 314; these read LLGFYLNTSPYLVGVAFCASI, KIPITVLLHRTILLSIWSIFL, VLIYLPWPCAVDCLIITFFAL, PQITLVNIGWAIPMAMHSLGL, PTVCMFLFIGLVIIMIDVIYS, GFLAMAGFFTGLGLSFFVVSV, and KSAFFLATLFWLFGFVIEYCL.

It belongs to the UbiA prenyltransferase family. The cofactor is Mg(2+).

It localises to the membrane. The enzyme catalyses 3,5-dimethylorsellinate + (2E,6E)-farnesyl diphosphate = (3R)-3-farnesyl-6-hydroxy-2,3,5-trimethyl-4-oxocyclohexa-1,5-diene-1-carboxylate + diphosphate + H(+). It participates in secondary metabolite biosynthesis; terpenoid biosynthesis. Functionally, prenytransferase; part of the gene cluster that mediates the biosynthesis of andrastins, meroterpenoid compounds that exhibit inhibitory activity against ras farnesyltransferase, suggesting that they could be promising leads for antitumor agents. The first step of the pathway is the synthesis of 3,5-dimethylorsellinic acid (DMOA) by the polyketide synthase adrD via condensation of one acetyl-CoA starter unit with 3 malonyl-CoA units and 2 methylations. DMAO is then converted to farnesyl-DMAO by the prenyltransferase adrG. The methyltransferase adrK catalyzes the methylation of the carboxyl group of farnesyl-DMAO to farnesyl-DMAO methyl ester which is further converted to epoxyfarnesyl-DMAO methyl ester by the FAD-dependent monooxygenase adrH. The terpene cyclase adrI then catalyzes the carbon skeletal rearrangement to generate the andrastin E, the first compound in the pathway having the andrastin scaffold, with the tetracyclic ring system. The post-cyclization tailoring enzymes adrF, adrE, adrJ, and adrA, are involved in the conversion of andrastin E into andrastin A. The short chain dehydrogenase adrF is responsible for the oxidation of the C-3 a hydroxyl group of andrastin E to yield the corresponding ketone, andrastin D. The ketoreductase adrE stereoselectively reduces the carbonyl moiety to reverse the stereochemistry of the C-3 position to yield andrastin F. The acetyltransferase adrJ is the acetyltransferase that attaches the acetyl group to the C-3 hydroxyl group of andrastin F to yield andrastin C. Finally, the cytochrome P450 monooxygenase adrA catalyzes two sequential oxidation reactions of the C-23 methyl group, to generate the corresponding alcohol andrastin B, and aldehyde andrastin A. The sequence is that of Prenytransferase adrG from Penicillium roqueforti.